The sequence spans 230 residues: Probable endonuclease C19F8.04c (230 aa).

A helical membrane pass occupies residues 10–27 (AIIGTGLITTSIGGFFFL). One can recognise a TNase-like domain in the interval 55-216 (KTMFGYVTRV…KKKKLSLWSQ (162 aa)). Arginine 104 is an active-site residue. Aspartate 109 is a Ca(2+) binding site. Catalysis depends on residues glutamate 112 and arginine 152.

This sequence belongs to the LCL3 family.

Its subcellular location is the mitochondrion. It is found in the membrane. This chain is Probable endonuclease C19F8.04c, found in Schizosaccharomyces pombe (strain 972 / ATCC 24843) (Fission yeast).